We begin with the raw amino-acid sequence, 228 residues long: 2,3-bisphosphoglycerate-dependent phosphoglycerate mutase (228 aa).

Residues 8-15, 21-22, R60, 87-90, K98, 114-115, and 183-184 contribute to the substrate site; these read RHGQSVWN, TG, ERHY, RR, and GN. Catalysis depends on H9, which acts as the Tele-phosphohistidine intermediate. The Proton donor/acceptor role is filled by E87.

This sequence belongs to the phosphoglycerate mutase family. BPG-dependent PGAM subfamily.

It carries out the reaction (2R)-2-phosphoglycerate = (2R)-3-phosphoglycerate. Its pathway is carbohydrate degradation; glycolysis; pyruvate from D-glyceraldehyde 3-phosphate: step 3/5. Functionally, catalyzes the interconversion of 2-phosphoglycerate and 3-phosphoglycerate. The chain is 2,3-bisphosphoglycerate-dependent phosphoglycerate mutase from Staphylococcus saprophyticus subsp. saprophyticus (strain ATCC 15305 / DSM 20229 / NCIMB 8711 / NCTC 7292 / S-41).